A 64-amino-acid chain; its full sequence is Large ribosomal subunit protein uL29 (64 aa).

The protein belongs to the universal ribosomal protein uL29 family.

This is Large ribosomal subunit protein uL29 from Ralstonia pickettii (strain 12J).